The primary structure comprises 360 residues: Phospho-N-acetylmuramoyl-pentapeptide-transferase (360 aa).

A run of 10 helical transmembrane segments spans residues 21–41, 73–93, 94–114, 132–152, 168–188, 199–219, 239–259, 263–283, 288–308, and 338–358; these read YITV…LWIG, TMGG…WANL, ANPY…IGFV, WKYF…YWLG, IMPQ…VGTG, GLAI…AWAT, VVVF…FNTY, VFMG…VAIL, FLLV…ILQV, and VIIR…VTLK.

This sequence belongs to the glycosyltransferase 4 family. MraY subfamily. The cofactor is Mg(2+).

It is found in the cell inner membrane. It catalyses the reaction UDP-N-acetyl-alpha-D-muramoyl-L-alanyl-gamma-D-glutamyl-meso-2,6-diaminopimeloyl-D-alanyl-D-alanine + di-trans,octa-cis-undecaprenyl phosphate = di-trans,octa-cis-undecaprenyl diphospho-N-acetyl-alpha-D-muramoyl-L-alanyl-D-glutamyl-meso-2,6-diaminopimeloyl-D-alanyl-D-alanine + UMP. It participates in cell wall biogenesis; peptidoglycan biosynthesis. Its function is as follows. Catalyzes the initial step of the lipid cycle reactions in the biosynthesis of the cell wall peptidoglycan: transfers peptidoglycan precursor phospho-MurNAc-pentapeptide from UDP-MurNAc-pentapeptide onto the lipid carrier undecaprenyl phosphate, yielding undecaprenyl-pyrophosphoryl-MurNAc-pentapeptide, known as lipid I. The protein is Phospho-N-acetylmuramoyl-pentapeptide-transferase of Haemophilus influenzae (strain ATCC 51907 / DSM 11121 / KW20 / Rd).